The primary structure comprises 563 residues: PTS system fructose-specific EIIB'BC component (563 aa).

PTS EIIB type-2 domains lie at 1–85 and 104–201; these read MKTL…KGHA and KRVV…KAVA. The active-site Phosphocysteine intermediate; for EIIB activity is Cys112. Position 112 is a phosphocysteine; by EIIA (Cys112). Residues 226 to 561 enclose the PTS EIIC type-2 domain; sequence AYRHLLTGVS…KRPEVDAVAK (336 aa). 9 consecutive transmembrane segments (helical) span residues 236 to 256, 274 to 294, 304 to 324, 349 to 369, 382 to 402, 430 to 450, 463 to 483, 489 to 509, and 518 to 538; these read YMLP…AFGI, GGSA…FSIA, IGGM…IAGF, ILII…YLIG, WLQT…GGMM, MAAI…ATMV, GKAA…PFAA, VLPC…AIGA, and LFVL…VAII.

The protein resides in the cell inner membrane. It carries out the reaction D-fructose(out) + N(pros)-phospho-L-histidyl-[protein] = D-fructose 1-phosphate(in) + L-histidyl-[protein]. Functionally, the phosphoenolpyruvate-dependent sugar phosphotransferase system (sugar PTS), a major carbohydrate active transport system, catalyzes the phosphorylation of incoming sugar substrates concomitantly with their translocation across the cell membrane. The enzyme II FruAB PTS system is involved in fructose transport. In Escherichia coli (strain K12), this protein is PTS system fructose-specific EIIB'BC component.